Reading from the N-terminus, the 72-residue chain is uncharacterized protein (72 aa).

The segment at 15 to 62 is disordered; it reads NNNYNNNNNNNNNNNNNNNNNNNNNNNNNNININNNNNNNNNNNNNNN.

This is an uncharacterized protein from Dictyostelium discoideum (Social amoeba).